The chain runs to 108 residues: UPF0060 membrane protein YnfA (108 aa).

The Periplasmic segment spans residues 1–5 (MLKTT). The helical transmembrane segment at 6–26 (LLFFVTALCEIIGCFLTWLWI) threads the bilayer. Over 27 to 30 (KRGA) the chain is Cytoplasmic. A helical membrane pass occupies residues 31-51 (SVWWLLPAAASLALFVWLLTL). Residues 52–60 (HPAASGRVY) are Periplasmic-facing. Residues 61-81 (AAYGGVYVCTALLWLRVVDGV) traverse the membrane as a helical segment. Residues 82 to 84 (RLT) are Cytoplasmic-facing. A helical membrane pass occupies residues 85–105 (VYDWCGAPIALCGMLIIVVGW). Residues 106-108 (GRT) are Periplasmic-facing.

This sequence belongs to the UPF0060 family.

Its subcellular location is the cell inner membrane. This is UPF0060 membrane protein YnfA from Salmonella dublin (strain CT_02021853).